We begin with the raw amino-acid sequence, 286 residues long: 2-hydroxy-6-oxo-6-phenylhexa-2,4-dienoate hydrolase (286 aa).

Substrate-binding positions include 42 to 43 (GG), Asn-51, Lys-111, Ser-180, and Arg-190. The region spanning 173–271 (NVFLFDQSLI…RCVHWAQWEH (99 aa)) is the AB hydrolase-1 domain. The active-site Proton acceptor is His-265. Residue Trp-266 participates in substrate binding.

The protein belongs to the AB hydrolase superfamily. BphD family. As to quaternary structure, homodimer.

It carries out the reaction 2,6-dioxo-6-phenylhexa-3-enoate + H2O = 2-oxopent-4-enoate + benzoate + H(+). It functions in the pathway xenobiotic degradation; biphenyl degradation; 2-hydroxy-2,4-pentadienoate and benzoate from biphenyl: step 4/4. Catalyzes an unusual C-C bond hydrolysis of 2-hydroxy-6-oxo-6-phenylhexa-2,4-dienoic acid (HOPDA) to produce benzoic acid and 2-hydroxy-2,4-pentadienoic acid (HPD). The polypeptide is 2-hydroxy-6-oxo-6-phenylhexa-2,4-dienoate hydrolase (Delftia acidovorans (Pseudomonas acidovorans)).